The chain runs to 543 residues: Thiamine transport system permease protein ThiP (543 aa).

The next 12 membrane-spanning stretches (helical) occupy residues 19 to 39 (VAGG…LLAL), 64 to 84 (FTIW…IPIA), 102 to 122 (LFAL…TSIY), 142 to 162 (DIYG…PLAV), 205 to 225 (GMIG…LTLG), 250 to 270 (AVAL…ILRL), 300 to 320 (IIVI…VVVS), 343 to 363 (LALG…LVAA), 379 to 399 (GASL…FILL), 406 to 426 (FVMA…PFAV), 468 to 488 (GMAF…IALF), and 510 to 530 (FDAA…MMIA). The ABC transmembrane type-1 1 domain maps to 62-266 (ARFTIWQAVA…QLALTLLILL (205 aa)). An ABC transmembrane type-1 2 domain is found at 339–530 (IATSLALGFS…VLCLALMMIA (192 aa)).

It belongs to the binding-protein-dependent transport system permease family. CysTW subfamily. In terms of assembly, the complex is composed of two ATP-binding proteins (ThiQ), two transmembrane proteins (ThiP) and a solute-binding protein (ThiB).

The protein resides in the cell inner membrane. In terms of biological role, part of the ABC transporter complex ThiBPQ involved in thiamine import. Probably responsible for the translocation of the substrate across the membrane. The polypeptide is Thiamine transport system permease protein ThiP (thiP) (Brucella abortus (strain 2308)).